Reading from the N-terminus, the 572-residue chain is Adenine deaminase (572 aa).

Belongs to the metallo-dependent hydrolases superfamily. Adenine deaminase family. Mn(2+) is required as a cofactor.

The enzyme catalyses adenine + H2O + H(+) = hypoxanthine + NH4(+). The chain is Adenine deaminase from Clostridium perfringens (strain 13 / Type A).